The primary structure comprises 196 residues: Segregation and condensation protein B (196 aa).

Belongs to the ScpB family. Homodimer. Homodimerization may be required to stabilize the binding of ScpA to the Smc head domains. Component of a cohesin-like complex composed of ScpA, ScpB and the Smc homodimer, in which ScpA and ScpB bind to the head domain of Smc. The presence of the three proteins is required for the association of the complex with DNA.

The protein localises to the cytoplasm. Participates in chromosomal partition during cell division. May act via the formation of a condensin-like complex containing Smc and ScpA that pull DNA away from mid-cell into both cell halves. The protein is Segregation and condensation protein B of Pediococcus pentosaceus (strain ATCC 25745 / CCUG 21536 / LMG 10740 / 183-1w).